The sequence spans 780 residues: ATPase family gene 2 protein (780 aa).

Low complexity predominate over residues 1–23 (MAPKSSSSGSKKKSSASSNSADA). The interval 1–26 (MAPKSSSSGSKKKSSASSNSADAKAS) is disordered. Residues 286 to 293 (GPPGTGKT) and 557 to 564 (GPPGCSKT) contribute to the ATP site.

Belongs to the AAA ATPase family. AFG2 subfamily. As to quaternary structure, homohexamer; ATP binding induces oligomerization. Forms a ring-shaped particle of about 12 nm diameter, that displays 6-fold radial symmetry. Associates with cytoplasmic pre-60S ribosomal particles containing ARX1, ALB1, RLP24 and NOG1. Binds to pre-60S ribosomal particles soon after their export from the nucleus and is released before REI1 and LSG1 are incorporated into the particles. Hexameric form interacts with RLP24 (via C-terminal); the interaction recruits AFG2 to pre-60S ribosomal particles and promotes AFG2 ATPase activity and RLP24 release from pre-60S ribosomal particles. Interacts (via N-terminus) with nucleoporin NUP116 (via N-terminus); the interaction is required for RLP24 release from pre-60S ribosomal particles.

Its subcellular location is the cytoplasm. It catalyses the reaction ATP + H2O = ADP + phosphate + H(+). The hexamer is activated by RLP24 during pre-60S ribosomal particle maturation; RLP24 activates ATPase activity of both ATP-binding regions and increases cooperativity between AFG2 subunits. The second ATP-binding region is inhibited by diazaborine; the inhibition requires prior ATP binding specifically to the second ATP-binding region. Its function is as follows. ATP-dependent chaperone which uses the energy provided by ATP hydrolysis to generate mechanical force to disassemble protein complexes. Plays an essential role in the cytoplasmic maturation steps of pre-60S ribosomal particles by promoting the release of shuttling protein RLP24 from the pre-ribosomal particles. This step facilitates the subsequent release of other shuttling proteins such as NOG1 and allows the transition of the pre-ribosomal particles to later maturation forms that bind REI1. Essential for viability. The polypeptide is ATPase family gene 2 protein (Saccharomyces cerevisiae (strain ATCC 204508 / S288c) (Baker's yeast)).